We begin with the raw amino-acid sequence, 724 residues long: Ribosomal RNA large subunit methyltransferase K/L (724 aa).

The 112-residue stretch at 42–153 (DAQRLVLWSR…KGRATLSVDL (112 aa)) folds into the THUMP domain.

This sequence belongs to the methyltransferase superfamily. RlmKL family.

Its subcellular location is the cytoplasm. The enzyme catalyses guanosine(2445) in 23S rRNA + S-adenosyl-L-methionine = N(2)-methylguanosine(2445) in 23S rRNA + S-adenosyl-L-homocysteine + H(+). It catalyses the reaction guanosine(2069) in 23S rRNA + S-adenosyl-L-methionine = N(2)-methylguanosine(2069) in 23S rRNA + S-adenosyl-L-homocysteine + H(+). Functionally, specifically methylates the guanine in position 2445 (m2G2445) and the guanine in position 2069 (m7G2069) of 23S rRNA. The chain is Ribosomal RNA large subunit methyltransferase K/L from Xylella fastidiosa (strain M12).